Consider the following 387-residue polypeptide: ATP phosphoribosyltransferase regulatory subunit (387 aa).

It belongs to the class-II aminoacyl-tRNA synthetase family. HisZ subfamily. In terms of assembly, heteromultimer composed of HisG and HisZ subunits.

The protein resides in the cytoplasm. It participates in amino-acid biosynthesis; L-histidine biosynthesis; L-histidine from 5-phospho-alpha-D-ribose 1-diphosphate: step 1/9. Required for the first step of histidine biosynthesis. May allow the feedback regulation of ATP phosphoribosyltransferase activity by histidine. This Psychrobacter cryohalolentis (strain ATCC BAA-1226 / DSM 17306 / VKM B-2378 / K5) protein is ATP phosphoribosyltransferase regulatory subunit.